Reading from the N-terminus, the 494-residue chain is Calmodulin-binding protein 60 A (494 aa).

A calmodulin-binding region spans residues 1 to 62; the sequence is MRIPTYDFGS…AGIKWICEKE (62 aa). The DNA-binding stretch occupies residues 132–252; sequence VSDWTDEDIR…AFHRRLNLSN (121 aa).

This sequence belongs to the plant ACBP60 protein family. Interacts with calmodulin (CaM). In terms of tissue distribution, expressed in stems, flowers and root.

The protein resides in the nucleus. Its function is as follows. Transcription activator that binds DNA in a sequence-specific manner, likely 5'-GAAATTTTGG-3', to promote the expression of target genes. The chain is Calmodulin-binding protein 60 A from Arabidopsis thaliana (Mouse-ear cress).